An 83-amino-acid chain; its full sequence is MVTIRLQRGGAKKRPFYQVVVADSRRSRDGRFIENIGFFNPTAQGQEERLRLDLDRVEHWVGNGAGLSDRVARLVKDAQKAAA.

The protein belongs to the bacterial ribosomal protein bS16 family.

This is Small ribosomal subunit protein bS16 from Pseudoalteromonas atlantica (strain T6c / ATCC BAA-1087).